We begin with the raw amino-acid sequence, 307 residues long: Glycine--tRNA ligase alpha subunit (307 aa).

This sequence belongs to the class-II aminoacyl-tRNA synthetase family. Tetramer of two alpha and two beta subunits.

The protein resides in the cytoplasm. It carries out the reaction tRNA(Gly) + glycine + ATP = glycyl-tRNA(Gly) + AMP + diphosphate. This chain is Glycine--tRNA ligase alpha subunit, found in Aeromonas salmonicida (strain A449).